The primary structure comprises 470 residues: MTYTVRTYGCQMNVHDSERIAGVLEDEGYVKSGSDDADVVVLNTCAVRENADNRFYGNLGQLLQKKNNGRIRQIAVGGCLAQKDRHKIFEKAPWVDVVFGTHNLGSLPALLRRSRHNKTAEIEIKDFLETFPSSLPVRRESNYSAWVSISVGCNNTCTFCIVPSLRGKERDRRPGDILAEISALVSEGVLEVTLLGQNVNTYGVEFGDRSAFASLLRKAGAIEGLERLKFTSPHPAAFTSDVIDAMHDTQAVLPQLHMPLQSGSDRILRAMRRSYRAGKFLKIISEARNKIPNIAITTDIIVGFPGETEEDFQDTLNLVAEVRFASAFTFQYSPRPGTPAASMPNQIPGDIVQERYERLLDLQNRIALEENRKLIGKEVELLVTVGGRKDSMLDNRYTGRTPCGRLVHFSCLHQLRPGDFATVKIIYAAPYHLIGDNALTVRRTPAGDVWIQKNDTRSAQLVSLGMPRIR.

The MTTase N-terminal domain occupies 1–116; sequence MTYTVRTYGC…LPALLRRSRH (116 aa). [4Fe-4S] cluster is bound by residues Cys-10, Cys-45, Cys-79, Cys-153, Cys-157, and Cys-160. A Radical SAM core domain is found at 139-369; sequence RESNYSAWVS…LDLQNRIALE (231 aa). A TRAM domain is found at 372–439; sequence RKLIGKEVEL…PYHLIGDNAL (68 aa).

The protein belongs to the methylthiotransferase family. MiaB subfamily. In terms of assembly, monomer. [4Fe-4S] cluster is required as a cofactor.

It localises to the cytoplasm. It carries out the reaction N(6)-dimethylallyladenosine(37) in tRNA + (sulfur carrier)-SH + AH2 + 2 S-adenosyl-L-methionine = 2-methylsulfanyl-N(6)-dimethylallyladenosine(37) in tRNA + (sulfur carrier)-H + 5'-deoxyadenosine + L-methionine + A + S-adenosyl-L-homocysteine + 2 H(+). Functionally, catalyzes the methylthiolation of N6-(dimethylallyl)adenosine (i(6)A), leading to the formation of 2-methylthio-N6-(dimethylallyl)adenosine (ms(2)i(6)A) at position 37 in tRNAs that read codons beginning with uridine. The chain is tRNA-2-methylthio-N(6)-dimethylallyladenosine synthase from Tropheryma whipplei (strain Twist) (Whipple's bacillus).